Here is a 158-residue protein sequence, read N- to C-terminus: Small ribosomal subunit protein bS6 (158 aa).

Residues 92–149 are compositionally biased toward basic and acidic residues; sequence RVDEHEEGPSAMMRKADRDRERDDRGPREGGFRGDREGRGDRDGFRGDRGPRRPREDA. The tract at residues 92–158 is disordered; the sequence is RVDEHEEGPS…ADAPAAAVEE (67 aa).

The protein belongs to the bacterial ribosomal protein bS6 family.

Binds together with bS18 to 16S ribosomal RNA. The sequence is that of Small ribosomal subunit protein bS6 from Rhodopseudomonas palustris (strain ATCC BAA-98 / CGA009).